The following is a 446-amino-acid chain: Citrate/sodium symporter (446 aa).

Over methionine 1–proline 27 the chain is Cytoplasmic. The chain crosses the membrane as a helical span at residues leucine 28–tyrosine 44. At asparagine 45 to aspartate 50 the chain is on the periplasmic side. A helical transmembrane segment spans residues isoleucine 51–arginine 71. Over leucine 72–glycine 80 the chain is Cytoplasmic. A helical membrane pass occupies residues glycine 81–tyrosine 95. The Periplasmic segment spans residues alanine 96–asparagine 115. The chain crosses the membrane as a helical span at residues phenylalanine 116–leucine 130. The Cytoplasmic portion of the chain corresponds to serine 131–leucine 136. A helical membrane pass occupies residues leucine 137 to phenylalanine 166. Topologically, residues glycine 167 to isoleucine 181 are periplasmic. Na(+) is bound by residues isoleucine 181 and glycine 183. The helical intramembrane region spans methionine 182–glycine 189. Asparagine 186 and glycine 187 together coordinate citrate. Over alanine 190–alanine 212 the chain is Periplasmic. Residues isoleucine 213–isoleucine 233 form a helical membrane-spanning segment. Topologically, residues glycine 234–threonine 264 are cytoplasmic. A helical transmembrane segment spans residues histidine 265–lysine 287. At lysine 288–histidine 299 the chain is on the periplasmic side. A helical membrane pass occupies residues tyrosine 300–glycine 315. Topologically, residues leucine 316–arginine 327 are cytoplasmic. Residues leucine 328 to leucine 351 form a helical membrane-spanning segment. The Periplasmic portion of the chain corresponds to glutamine 352 to threonine 359. A helical transmembrane segment spans residues phenylalanine 360–glycine 381. At tryptophan 382–cysteine 398 the chain is on the cytoplasmic side. Residues methionine 399 and asparagine 401 each coordinate Na(+). The helical intramembrane region spans methionine 399–glycine 406. 3 residues coordinate citrate: arginine 402, glycine 404, and serine 405. Residues aspartate 407–arginine 416 are Cytoplasmic-facing. A helical membrane pass occupies residues methionine 417 to alanine 438. Position 428 (arginine 428) interacts with citrate. At serine 439 to isoleucine 446 the chain is on the periplasmic side.

This sequence belongs to the 2-hydroxycarboxylate transporter (2-HCT) (TC 2.A.24) family. As to quaternary structure, homodimer.

It localises to the cell inner membrane. It catalyses the reaction citrate(out) + 2 Na(+)(out) = citrate(in) + 2 Na(+)(in). In the absence of Na(+), transport is inhibited by the thiol reagents N-ethylmaleimide (NEM) and the methanethiosulfonate (MTS) derivatives MTSEA, MTSET and MTSES. However, inactivation by NEM, MTSES and MTSET is prevented by the presence of Na(+). In the absence of Na(+), the substrate citrate has no effect on the inactivation by permeable or impermeable thiol reagents. In contrast, when subsaturating concentrations of Na(+) are present, citrate significantly reduces inactivation, suggesting ordered binding of the substrate and co-ion; citrate is bound after Na(+). The membrane impermeable bulky maleimide AmdiS does not inactivate the transporter in right-side-out membrane vesicles. The apparent affinity for Na(+) decreases with increasing proton concentration. Protons cannot replace Na(+) in the translocation step but the decrease in apparent affinity for Na(+) towards lower pH suggests that protons can compete with Na(+) for the cation-binding sites. Functionally, secondary active transporter that catalyzes the uptake of citrate across the membrane with the concomitant uptake of sodium. There are conflicting data regarding exact substrate stoichiometry: the sodium/citrate stoichiometry was predicted to be 1, but the latest studies suggest that CitS transports citrate in symport with 2 sodium ions. Transports citrate as a divalent citrate anion, H-citrate(2-). Shows narrow substrate specificity and is very specific, transporting only citrate and to a low extent citromalate. Symport of Na(+) is absolutely required in the range pH 5-7 because no uptake can be detected in the absence of Na(+). Lithium can replace Na(+) in the symport reaction but it takes about a 200-fold higher concentration of Li(+) over Na(+) to achieve the same rate of uptake. This is Citrate/sodium symporter from Klebsiella pneumoniae.